A 357-amino-acid chain; its full sequence is Cinnamyl alcohol dehydrogenase 1 (357 aa).

Positions 20 to 348 (GILSPYTYTL…KNDVRYRFVV (329 aa)) constitute an Enoyl reductase (ER) domain. Cys-47 is a Zn(2+) binding site. Ser-49 provides a ligand contact to NADP(+). 7 residues coordinate Zn(2+): His-69, Glu-70, Cys-100, Cys-103, Cys-106, Cys-114, and Cys-163. Residues Thr-167, 188-193 (GLGGVG), 211-216 (SSSDKK), Thr-251, Gly-275, and 298-300 (SFI) contribute to the NADP(+) site.

This sequence belongs to the zinc-containing alcohol dehydrogenase family. In terms of assembly, homodimer. Zn(2+) serves as cofactor. Accumulates mainly in the placenta of red fruits, and, to a lower extent, in green fruits placenta, pericarp and seeds.

It is found in the cytoplasm. It catalyses the reaction (E)-cinnamyl alcohol + NADP(+) = (E)-cinnamaldehyde + NADPH + H(+). The enzyme catalyses (E)-coniferol + NADP(+) = (E)-coniferaldehyde + NADPH + H(+). It carries out the reaction (E)-sinapyl alcohol + NADP(+) = (E)-sinapaldehyde + NADPH + H(+). The catalysed reaction is (E)-4-coumaroyl alcohol + NADP(+) = (E)-4-coumaraldehyde + NADPH + H(+). It catalyses the reaction (E)-caffeyl alcohol + NADP(+) = (E)-caffeyl aldehyde + NADPH + H(+). The enzyme catalyses vanillin + NADPH + H(+) = 4-hydroxy-3-methoxy-benzenemethanol + NADP(+). The protein operates within aromatic compound metabolism; phenylpropanoid biosynthesis. Its activity is regulated as follows. Inhibited, in a concentration-dependent manner, by N-(O-hydroxyphenyl) sulfinamoyltertiobutyl acetate (OHPAS), a specific cinnamyl alcohol dehydrogenase (CAD) inhibitor, as well as by ethylenediaminetetraacetic acid (EDTA), a metalloenzyme inhibitor. Involved in the biosynthesis of capsinoids natural products (e.g. capsiate), non-pungent alkaloids synthesized from phenylpropanoid intermediates in the placental tissue of sweet chili pepper fruit acting as repellant on herbivorous mammals. Catalyzes the reduction of vanillin to generate vanillyl alcohol, a precursor of capsiate, a non-pungent component that accumulates mainly in the placenta of mature red fruits, but also in green fruits to lower levels. Involved in lignin biosynthesis. Catalyzes the final step specific for the production of lignin monomers. Mediates the conversion of cinnamaldehyde and coniferaldehyde to cinnamyl alcohol and coniferyl alcohol, respectively. Catalyzes the NADPH-dependent reduction of 5-hydroxyconiferaldehyde, sinapaldehyde, 4-coumaraldehyde and caffeyl aldehyde to their respective alcohols. The protein is Cinnamyl alcohol dehydrogenase 1 of Capsicum annuum (Capsicum pepper).